We begin with the raw amino-acid sequence, 235 residues long: Uridylate kinase (235 aa).

10-11 contacts ATP; it reads GS. Gly-45 provides a ligand contact to UMP. Gly-46 and Arg-50 together coordinate ATP. UMP-binding positions include Asp-67 and 115 to 121; that span reads VTPGQTT. 3 residues coordinate ATP: Thr-141, Tyr-147, and Asp-150.

Belongs to the UMP kinase family. In terms of assembly, homohexamer.

It is found in the cytoplasm. It catalyses the reaction UMP + ATP = UDP + ADP. The protein operates within pyrimidine metabolism; CTP biosynthesis via de novo pathway; UDP from UMP (UMPK route): step 1/1. With respect to regulation, inhibited by UTP. Its function is as follows. Catalyzes the reversible phosphorylation of UMP to UDP. In Methanocorpusculum labreanum (strain ATCC 43576 / DSM 4855 / Z), this protein is Uridylate kinase.